The primary structure comprises 625 residues: MSLSSCLLPFSQSATAPSSSVCSCHLAASFSNFPVSSRDYSFSRSGSLVLNGGGSNLCRRFCGLKLWILKSLNRRQGNNRKHQPVNELTTHSKHTFLSDDERGFAEETRAEDLRPEENILGTDLNDGFHNVGDLPPVSKQLSDDLSDVRRRASLCIAVVGATGELARGKIFPALFALYYSGYLPEDVAIFGVSRKNLTDEDLRSIIASTLTCRVDHQENCGGKMDAFQSRTYYINGGYNNRDGMSRLAERMKQIEGESEANRIFYLSVPQEALVDVACTIGDNAQAPRGWTRIIVEKPFGFNSHSSHQLTKSLLSKFEEKQIYRIDHMLGRNLIENLTVLRFSNLVFEPLWNRTYIRNIQVIISESIAQTEKFSDGYGIIRDIVHSHILQTIALLAMEPPISLDGEDIRNEKVKVLRSIRKIDPRDVILGQYKSSSRDKNGVILNGVDPTYCAAALYIDNARWDGVPFLVRVGTGLIKHRVEIHVQFRHVPGNLYRENIGINIDLGTNELILRDEPDEAILVKINNKVPGLGLQLDASELNLLYKDRYKTEVPDSYEHLIHDVIDGDNHLFMRSDEVAAAWNILSPVLEEIDKHHTAPELYEFGGRGPVAAYYLWAKHGVPWADD.

A chloroplast-targeting transit peptide spans 1 to 49 (MSLSSCLLPFSQSATAPSSSVCSCHLAASFSNFPVSSRDYSFSRSGSLV). NADP(+) is bound by residues 160–167 (GATGELAR) and Arg194. Cysteines 212 and 220 form a disulfide. Lys297 serves as a coordination point for NADP(+). D-glucose 6-phosphate contacts are provided by residues Lys297, 327 to 331 (HMLGR), Glu365, and Asp382. His387 acts as the Proton acceptor in catalysis. NADP(+)-binding residues include Arg471, Arg480, Arg513, and Arg606.

Belongs to the glucose-6-phosphate dehydrogenase family. Forms homodimer. Interacts with G6PD1. Expressed in leaves, stems and buds.

It is found in the plastid. The protein localises to the chloroplast stroma. Functionally, seems to be a catalytically inactive enzyme. This chain is Inactive glucose-6-phosphate 1-dehydrogenase 4, chloroplastic, found in Arabidopsis thaliana (Mouse-ear cress).